A 204-amino-acid polypeptide reads, in one-letter code: Outer-membrane lipoprotein carrier protein (204 aa).

The N-terminal stretch at 1–21 (MKKLLVACCVVSGMMSASVLA) is a signal peptide.

The protein belongs to the LolA family. As to quaternary structure, monomer.

It is found in the periplasm. Functionally, participates in the translocation of lipoproteins from the inner membrane to the outer membrane. Only forms a complex with a lipoprotein if the residue after the N-terminal Cys is not an aspartate (The Asp acts as a targeting signal to indicate that the lipoprotein should stay in the inner membrane). The protein is Outer-membrane lipoprotein carrier protein of Edwardsiella ictaluri (strain 93-146).